Reading from the N-terminus, the 429-residue chain is Serine/threonine-protein kinase BGLF4 (429 aa).

The tract at residues 1 to 27 is disordered; that stretch reads MDVNMAAELSPTNSSSSGELSVSPEPP. In terms of domain architecture, Protein kinase spans 1–409; sequence MDVNMAAELS…CRPRFEHPHL (409 aa). Over residues 14 to 23 the composition is skewed to low complexity; that stretch reads SSSSGELSVS. The interval 36-40 is SUMO interaction motif; sequence KVTVI. ATP-binding positions include 110–118 and Glu-128; that span reads LYHELMVCD. Residue Asp-195 is the Proton acceptor of the active site. The interval 344–350 is SUMO interaction motif; sequence VVLLEVL.

It belongs to the protein kinase superfamily. Ser/Thr protein kinase family. Interacts with host NUP62 and NUP153; this interaction plays a role in nuclear targeting of BGLF4. Interacts with host SUMO1 and SUMO2.

It is found in the virion tegument. It localises to the host nucleus. It carries out the reaction L-seryl-[protein] + ATP = O-phospho-L-seryl-[protein] + ADP + H(+). The enzyme catalyses L-threonyl-[protein] + ATP = O-phospho-L-threonyl-[protein] + ADP + H(+). Its function is as follows. Plays many key roles by phosphorylating several proteins including the viral DNA processivity factor BMRF1, EBNA1 or EBNA2. Modifies the host nuclear envelope structure and induces the redistribution of nuclear envelope-associated proteins by phosphorylating host nucleoporins. Subsequently, promotes the nuclear transport of EBV lytic proteins. Required for efficient lytic DNA replication and release of nucleocapsids from the nucleus. Contributes to the compaction of host cell chromatin in cells undergoing lytic replication, presumably by phosphorylating the host condensin complex and host TOP2A. Induces disassembly of the nuclear lamina by phosphorylating with host LMNA. Phosphorylates substrates involved in capsid assembly and DNA packaging. Facilitates the switch from latent to lytic DNA replication by down-regulating EBNA1 replication function. Phosphorylates the viral immediate-early protein BZLF1 and inhibits its sumoylation by interacting with host SUMO1 and SUMO2. Phosphorylates also host SAMHD1 and thereby counteracts its antiviral effect by reducing its dNTP hydrolase activity. This is Serine/threonine-protein kinase BGLF4 from Epstein-Barr virus (strain AG876) (HHV-4).